Reading from the N-terminus, the 146-residue chain is Large ribosomal subunit protein uL15 (146 aa).

Residues 1 to 10 (MRLNQLSPSA) show a composition bias toward polar residues. The segment at 1–54 (MRLNQLSPSAGSRPDAKRAGRGAGSGLGKTAGRGHKGQHSRSGGFHKVGFEGGQ) is disordered. Residues 21–31 (RGAGSGLGKTA) are compositionally biased toward gly residues.

The protein belongs to the universal ribosomal protein uL15 family. In terms of assembly, part of the 50S ribosomal subunit.

Binds to the 23S rRNA. The sequence is that of Large ribosomal subunit protein uL15 from Halorhodospira halophila (strain DSM 244 / SL1) (Ectothiorhodospira halophila (strain DSM 244 / SL1)).